We begin with the raw amino-acid sequence, 481 residues long: Sulfate adenylyltransferase subunit 1 (481 aa).

Residues lysine 22–aspartate 236 form the tr-type G domain. Residues glycine 31–serine 38 are G1. Glycine 31 to serine 38 is a GTP binding site. Residues glycine 89–aspartate 93 are G2. A G3 region spans residues aspartate 110–glycine 113. GTP-binding positions include aspartate 110–histidine 114 and asparagine 165–aspartate 168. A G4 region spans residues asparagine 165–aspartate 168. A G5 region spans residues serine 202–leucine 204.

The protein belongs to the TRAFAC class translation factor GTPase superfamily. Classic translation factor GTPase family. CysN/NodQ subfamily. As to quaternary structure, heterodimer composed of CysD, the smaller subunit, and CysN.

It carries out the reaction sulfate + ATP + H(+) = adenosine 5'-phosphosulfate + diphosphate. The protein operates within sulfur metabolism; hydrogen sulfide biosynthesis; sulfite from sulfate: step 1/3. Its function is as follows. With CysD forms the ATP sulfurylase (ATPS) that catalyzes the adenylation of sulfate producing adenosine 5'-phosphosulfate (APS) and diphosphate, the first enzymatic step in sulfur assimilation pathway. APS synthesis involves the formation of a high-energy phosphoric-sulfuric acid anhydride bond driven by GTP hydrolysis by CysN coupled to ATP hydrolysis by CysD. This Laribacter hongkongensis (strain HLHK9) protein is Sulfate adenylyltransferase subunit 1.